Consider the following 385-residue polypeptide: AA13 family lytic polysaccharide monooxygenase aasA (385 aa).

The signal sequence occupies residues 1-18 (MKSLLALVAGNLVTAVSG). Histidine 19 contacts Cu(2+). Residue histidine 19 is modified to Methylhistidine. The tract at residues 19–248 (HGYLTVPASR…AQVYLHCADI (230 aa)) is N-terminal catalytic module. 7 disulfide bridges follow: cysteine 40/cysteine 43, cysteine 66/cysteine 245, cysteine 102/cysteine 203, cysteine 118/cysteine 145, cysteine 153/cysteine 161, cysteine 167/cysteine 173, and cysteine 181/cysteine 192. Histidine 109 is a binding site for Cu(2+). N-linked (GlcNAc...) asparagine glycosylation occurs at asparagine 120. Position 242 (tyrosine 242) interacts with Cu(2+). The tract at residues 254–276 (SGSSPSPTSTTSTATSTTTPSST) is disordered. Over residues 256–276 (SSPSPTSTTSTATSTTTPSST) the composition is skewed to low complexity. The 108-residue stretch at 278-385 (CASAISIPVT…TTATESGAWR (108 aa)) folds into the CBM20 domain. Asparagine 364 is a glycosylation site (N-linked (GlcNAc...) asparagine).

Belongs to the polysaccharide monooxygenase AA13 family. The cofactor is Cu(2+). In terms of processing, the catalytically essential N-terminal histidine His-19 is post-translationally modified by methylation to prevent protonation of the histidine side chain, and protect the critical active site of the enzyme from oxidative damage.

The protein localises to the secreted. The enzyme catalyses starch + reduced acceptor + O2 = D-glucono-1,5-lactone-terminated malto-oligosaccharides + short-chain malto-oligosaccharides + acceptor + H2O.. Starch-active polysaccharide monooxygenase that oxidizes the C1 position of starch substrates, but not in cellulose, chitin, polygalacturonan or esterified pectin, nor with Arabidopsis stem cell walls. Catalysis by LPMOs requires the reduction of the active-site copper from Cu(II) to Cu(I) by a reducing agent and H(2)O(2) or O(2) as a cosubstrate. The protein is AA13 family lytic polysaccharide monooxygenase aasA of Emericella nidulans (strain FGSC A4 / ATCC 38163 / CBS 112.46 / NRRL 194 / M139) (Aspergillus nidulans).